A 250-amino-acid polypeptide reads, in one-letter code: tRNA:m(4)X modification enzyme TRM13 (250 aa).

Residues 1–10 (MGRAPAKRKP) show a composition bias toward basic residues. The interval 1-20 (MGRAPAKRKPSSPPPPPPPG) is disordered. Over residues 11–20 (SSPPPPPPPG) the composition is skewed to pro residues. The CHHC U11-48K-type zinc-finger motif lies at 62–89 (LVPCPVDPSHTVLEENLEAHVGKCPLKK). Residues C65, H71, H81, and C85 each contribute to the Zn(2+) site.

This sequence belongs to the methyltransferase TRM13 family.

The protein localises to the nucleus. It is found in the cytoplasm. It catalyses the reaction cytidine(4) in tRNA(Pro) + S-adenosyl-L-methionine = 2'-O-methylcytidine(4) in tRNA(Pro) + S-adenosyl-L-homocysteine + H(+). The catalysed reaction is cytidine(4) in tRNA(Gly)(GCC) + S-adenosyl-L-methionine = 2'-O-methylcytidine(4) in tRNA(Gly)(GCC) + S-adenosyl-L-homocysteine + H(+). It carries out the reaction adenosine(4) in tRNA(His) + S-adenosyl-L-methionine = 2'-O-methyladenosine(4) in tRNA(His) + S-adenosyl-L-homocysteine + H(+). Its function is as follows. tRNA methylase that catalyzes 2'-O-methyladenosine (Am) nucleoside formation on tRNA(Gly)(GCC) in vitro. May 2'-O-methylate cytidine(4) in tRNA(Pro) and tRNA(Gly)(GCC), and adenosine(4) in tRNA(His). Involved in salt stress tolerance. In Oryza sativa subsp. japonica (Rice), this protein is tRNA:m(4)X modification enzyme TRM13.